Reading from the N-terminus, the 230-residue chain is MTQDELKRLVGQAAADYVIQNVPEGAVIGVGTGSTANCFIDALAAVKSRYRGAVSSSVATTERLKSHGIKVFDLNEIDALQVYVDGADEIDASGAMIKGGGGALTREKIVASVADTFVCIADGSKRVPVLGAFPLPIEVVPMARTAIGRRVAALGGVPVLRVTKDGAPYITDNGNEIIDVKGLQIAEPRAFEAKVNAWPGVVTVGLFAERGANLCLLGTENGVETIIYPA.

Residues 32 to 35, 85 to 88, and 98 to 101 each bind substrate; these read TGST, DGAD, and KGGG. Residue E107 is the Proton acceptor of the active site. Substrate is bound at residue K125.

This sequence belongs to the ribose 5-phosphate isomerase family. In terms of assembly, homodimer.

The enzyme catalyses aldehydo-D-ribose 5-phosphate = D-ribulose 5-phosphate. Its pathway is carbohydrate degradation; pentose phosphate pathway; D-ribose 5-phosphate from D-ribulose 5-phosphate (non-oxidative stage): step 1/1. Functionally, catalyzes the reversible conversion of ribose-5-phosphate to ribulose 5-phosphate. This Burkholderia vietnamiensis (strain G4 / LMG 22486) (Burkholderia cepacia (strain R1808)) protein is Ribose-5-phosphate isomerase A.